The chain runs to 379 residues: Sperm microtubule associated protein 2 (379 aa).

A disordered region spans residues 1–82; that stretch reads MGDSRRRSLG…EFPETLDPKE (82 aa). Basic and acidic residues-rich tracts occupy residues 19 to 29 and 38 to 50; these read GRSEREQDGDP and ESRRVTDPERQDL. Over residues 56 to 76 the composition is skewed to acidic residues; the sequence is GPEDPEEELPPEEVAGEEFPE. 6 THEG repeats span residues 118–137, 184–203, 222–241, 258–277, 290–309, and 326–345; these read KARKRRRRRRLMELAEPKIN, TITVPAVSRRVEELSRPKRF, SSLEYRASSRLKELAAPKIR, AAQMAVPSSRILQLSKPKAP, PKPHVSDHNRLLHLARPKAQ, and VTKKVVASPRIISLAKPKVR. Residue Ser295 is modified to Phosphoserine. The segment at 344–379 is disordered; the sequence is VRKGLNEGYDRRPLASMSLPPPKASPEKCDQPRPGL. 2 stretches are compositionally biased toward basic and acidic residues: residues 347-356 and 368-379; these read GLNEGYDRRP and SPEKCDQPRPGL.

As to quaternary structure, interacts with CCT5. As to expression, testis specific.

The protein resides in the nucleus. May be involved (but not essential) in spermatogenesis. The protein is Sperm microtubule associated protein 2 of Homo sapiens (Human).